The sequence spans 520 residues: 2-isopropylmalate synthase (520 aa).

The region spanning 5–267 (VIIFDTTLRD…HTNINHQEIY (263 aa)) is the Pyruvate carboxyltransferase domain. The Mn(2+) site is built by D14, H202, H204, and N238. Residues 392–520 (RLDYFSVQSG…RLQQNNQEMV (129 aa)) form a regulatory domain region.

The protein belongs to the alpha-IPM synthase/homocitrate synthase family. LeuA type 1 subfamily. In terms of assembly, homodimer. Requires Mn(2+) as cofactor.

It localises to the cytoplasm. The catalysed reaction is 3-methyl-2-oxobutanoate + acetyl-CoA + H2O = (2S)-2-isopropylmalate + CoA + H(+). The protein operates within amino-acid biosynthesis; L-leucine biosynthesis; L-leucine from 3-methyl-2-oxobutanoate: step 1/4. In terms of biological role, catalyzes the condensation of the acetyl group of acetyl-CoA with 3-methyl-2-oxobutanoate (2-ketoisovalerate) to form 3-carboxy-3-hydroxy-4-methylpentanoate (2-isopropylmalate). In Yersinia enterocolitica serotype O:8 / biotype 1B (strain NCTC 13174 / 8081), this protein is 2-isopropylmalate synthase.